The sequence spans 74 residues: Conotoxin AbVIH (74 aa).

The signal sequence occupies residues 1–17; that stretch reads VLIIAVLFLTACQLTTA. Residues 18-40 constitute a propeptide that is removed on maturation; that stretch reads ETSSRGKQKHRALRSTDKDSRMT. The tract at residues 19–40 is disordered; that stretch reads TSSRGKQKHRALRSTDKDSRMT. 3 disulfide bridges follow: cysteine 43–cysteine 57, cysteine 50–cysteine 61, and cysteine 56–cysteine 68.

It belongs to the conotoxin O1 superfamily. Expressed by the venom duct.

The protein localises to the secreted. This Conus abbreviatus (Abbreviated cone) protein is Conotoxin AbVIH.